A 429-amino-acid chain; its full sequence is D-amino acid dehydrogenase 1 (429 aa).

FAD is bound at residue 3–17 (VLVLGSGVIGVTSAY).

It belongs to the DadA oxidoreductase family. FAD is required as a cofactor.

The enzyme catalyses a D-alpha-amino acid + A + H2O = a 2-oxocarboxylate + AH2 + NH4(+). Oxidative deamination of D-amino acids. The chain is D-amino acid dehydrogenase 1 (dadA1) from Ralstonia nicotianae (strain ATCC BAA-1114 / GMI1000) (Ralstonia solanacearum).